A 620-amino-acid chain; its full sequence is Endoglucanase 10 (620 aa).

The tract at residues 1 to 26 (MFGRDPWGGPLEISNADSATDDDRSR) is disordered. The chain crosses the membrane as a helical; Signal-anchor for type II membrane protein span at residues 72–92 (IFMWTVGTILGVGLFIGFVMM). Residue Asp165 is the Nucleophile of the active site. Residues Asn216, Asn314, Asn323, Asn344, Asn408, and Asn425 are each glycosylated (N-linked (GlcNAc...) asparagine). Catalysis depends on residues His513 and Asp561. Asn567 carries N-linked (GlcNAc...) asparagine glycosylation. The active site involves Glu570.

This sequence belongs to the glycosyl hydrolase 9 (cellulase E) family. Ubiquitous.

Its subcellular location is the membrane. The enzyme catalyses Endohydrolysis of (1-&gt;4)-beta-D-glucosidic linkages in cellulose, lichenin and cereal beta-D-glucans.. The chain is Endoglucanase 10 (GLU2) from Oryza sativa subsp. japonica (Rice).